The chain runs to 428 residues: GTPase Obg (428 aa).

An Obg domain is found at 1 to 158 (MFVDQVKIYV…RDVILELKVL (158 aa)). Residues 159–329 (ADVGLVGFPS…LLFEVANLIE (171 aa)) enclose the OBG-type G domain. GTP-binding positions include 165–172 (GFPSVGKS), 190–194 (FTTIV), 212–215 (DLPG), 282–285 (NKMD), and 310–312 (SAV). The Mg(2+) site is built by serine 172 and threonine 192. The OCT domain maps to 350–428 (KFETEGVKFD…ILEYEFEFID (79 aa)).

This sequence belongs to the TRAFAC class OBG-HflX-like GTPase superfamily. OBG GTPase family. In terms of assembly, monomer. Mg(2+) serves as cofactor.

The protein localises to the cytoplasm. An essential GTPase which binds GTP, GDP and possibly (p)ppGpp with moderate affinity, with high nucleotide exchange rates and a fairly low GTP hydrolysis rate. Plays a role in control of the cell cycle, stress response, ribosome biogenesis and in those bacteria that undergo differentiation, in morphogenesis control. This is GTPase Obg from Bacillus cereus (strain AH820).